Reading from the N-terminus, the 182-residue chain is Adenine phosphoribosyltransferase (182 aa).

It belongs to the purine/pyrimidine phosphoribosyltransferase family. Homodimer.

The protein resides in the cytoplasm. The enzyme catalyses AMP + diphosphate = 5-phospho-alpha-D-ribose 1-diphosphate + adenine. It participates in purine metabolism; AMP biosynthesis via salvage pathway; AMP from adenine: step 1/1. Functionally, catalyzes a salvage reaction resulting in the formation of AMP, that is energically less costly than de novo synthesis. This chain is Adenine phosphoribosyltransferase, found in Pseudomonas fluorescens (strain Pf0-1).